The sequence spans 491 residues: Conidiogenone synthase PchP450 (491 aa).

The chain crosses the membrane as a helical span at residues 2–22 (LLLWFGFFSFVCGLVIYRLQF). Cysteine 430 serves as a coordination point for heme.

This sequence belongs to the cytochrome P450 family. Heme is required as a cofactor.

The protein localises to the membrane. The protein operates within secondary metabolite biosynthesis; terpenoid biosynthesis. Cytochrome P450 monooxygenase; part of the gene cluster that mediates the biosynthesis of conidiogenone, a diterpene known to induce the conidiation. The bifunctional terpene synthase PrDS converts isopentenyl diphosphate (IPP) and dimethylallyl diphosphate (DMAPP) into deoxyconidiogenol. The C-terminal prenyltransferase (PT) domain of PrDS catalyzes formation of GGPP, whereas the N-terminal terpene cyclase (TC) domain catalyzes the cyclization of GGPP into deoxyconidiogenol. The cytochrome P450 monooxygenase PrP450 then catalyzes two rounds of oxidation to furnish conidiogenone. This is Conidiogenone synthase PchP450 from Penicillium rubens (strain ATCC 28089 / DSM 1075 / NRRL 1951 / Wisconsin 54-1255) (Penicillium chrysogenum).